Consider the following 184-residue polypeptide: dITP/XTP pyrophosphatase (184 aa).

Substrate is bound at residue 8–13 (TGNKGK). Mg(2+)-binding residues include glutamate 37 and aspartate 66. Aspartate 66 serves as the catalytic Proton acceptor. Residues serine 67, 142–145 (FGYD), lysine 163, and 168–169 (HR) each bind substrate.

It belongs to the HAM1 NTPase family. As to quaternary structure, homodimer. The cofactor is Mg(2+).

It carries out the reaction XTP + H2O = XMP + diphosphate + H(+). The catalysed reaction is dITP + H2O = dIMP + diphosphate + H(+). It catalyses the reaction ITP + H2O = IMP + diphosphate + H(+). Functionally, pyrophosphatase that catalyzes the hydrolysis of nucleoside triphosphates to their monophosphate derivatives, with a high preference for the non-canonical purine nucleotides XTP (xanthosine triphosphate), dITP (deoxyinosine triphosphate) and ITP. Seems to function as a house-cleaning enzyme that removes non-canonical purine nucleotides from the nucleotide pool, thus preventing their incorporation into DNA/RNA and avoiding chromosomal lesions. The polypeptide is dITP/XTP pyrophosphatase (Methanosarcina acetivorans (strain ATCC 35395 / DSM 2834 / JCM 12185 / C2A)).